A 188-amino-acid polypeptide reads, in one-letter code: Peroxynitrite isomerase (188 aa).

Positions 35–41 (GTWRGEG) match the GXWXGXG motif. Histidine 178 lines the heme b pocket.

It belongs to the nitrobindin family. Homodimer. The cofactor is heme b.

The enzyme catalyses peroxynitrite = nitrate. It functions in the pathway nitrogen metabolism. Its function is as follows. Heme-binding protein able to scavenge peroxynitrite and to protect free L-tyrosine against peroxynitrite-mediated nitration, by acting as a peroxynitrite isomerase that converts peroxynitrite to nitrate. Therefore, this protein likely plays a role in peroxynitrite sensing and in the detoxification of reactive nitrogen and oxygen species (RNS and ROS, respectively). Is able to bind nitric oxide (NO) in vitro, but may act as a sensor of peroxynitrite levels in vivo. The chain is Peroxynitrite isomerase from Frankia casuarinae (strain DSM 45818 / CECT 9043 / HFP020203 / CcI3).